We begin with the raw amino-acid sequence, 327 residues long: MQHLQEIIANANAAIDAAQSLVALDEVRVQYLGKKGELTAQLQSLGKLPPEERREAGQEINKAKEVVQHALAARKDALQRAELEAKLASETIDVTLPGRRIENGGLHPVTRTVERIEQFFGELGFNVESGPEIEDAFHNFDALNIAADHPARTDHDTFFFNPDLMLRTHTSGVQIRTMENGKPPFRFIAPGRVYRNDYDQTHTPMFHQVEGMLVDENVNFAQLKGILHDFLCNFFEEEVEVRFRPSYFPFTEPSAEVDVKGKNGKWLEVLGCGMVHPNVLRSVGIDPEKYSGFAFGMGVERLTMLRYGVNDLRAFFENDLRFLKQFK.

Position 252 (Glu-252) interacts with Mg(2+).

The protein belongs to the class-II aminoacyl-tRNA synthetase family. Phe-tRNA synthetase alpha subunit type 1 subfamily. In terms of assembly, tetramer of two alpha and two beta subunits. The cofactor is Mg(2+).

It is found in the cytoplasm. The catalysed reaction is tRNA(Phe) + L-phenylalanine + ATP = L-phenylalanyl-tRNA(Phe) + AMP + diphosphate + H(+). This Vibrio vulnificus (strain CMCP6) protein is Phenylalanine--tRNA ligase alpha subunit.